The sequence spans 67 residues: SPbeta prophage-derived uncharacterized protein YoqK (67 aa).

The polypeptide is SPbeta prophage-derived uncharacterized protein YoqK (yoqK) (Bacillus subtilis (strain 168)).